The primary structure comprises 126 residues: Large ribosomal subunit protein uL22 (126 aa).

Belongs to the universal ribosomal protein uL22 family. Part of the 50S ribosomal subunit.

Functionally, this protein binds specifically to 23S rRNA; its binding is stimulated by other ribosomal proteins, e.g. L4, L17, and L20. It is important during the early stages of 50S assembly. It makes multiple contacts with different domains of the 23S rRNA in the assembled 50S subunit and ribosome. Its function is as follows. The globular domain of the protein is located near the polypeptide exit tunnel on the outside of the subunit, while an extended beta-hairpin is found that lines the wall of the exit tunnel in the center of the 70S ribosome. The protein is Large ribosomal subunit protein uL22 of Maricaulis maris (strain MCS10) (Caulobacter maris).